The chain runs to 1395 residues: DNA-directed RNA polymerase subunit beta' (1395 aa).

Zn(2+) is bound by residues C70, C72, C85, and C88. Residues D460, D462, and D464 each coordinate Mg(2+). Zn(2+) is bound by residues C814, C888, C895, and C898.

The protein belongs to the RNA polymerase beta' chain family. In terms of assembly, the RNAP catalytic core consists of 2 alpha, 1 beta, 1 beta' and 1 omega subunit. When a sigma factor is associated with the core the holoenzyme is formed, which can initiate transcription. Mg(2+) serves as cofactor. Zn(2+) is required as a cofactor.

It carries out the reaction RNA(n) + a ribonucleoside 5'-triphosphate = RNA(n+1) + diphosphate. DNA-dependent RNA polymerase catalyzes the transcription of DNA into RNA using the four ribonucleoside triphosphates as substrates. This chain is DNA-directed RNA polymerase subunit beta', found in Pseudoalteromonas atlantica (strain T6c / ATCC BAA-1087).